Consider the following 244-residue polypeptide: 5-oxoprolinase subunit A (244 aa).

Belongs to the LamB/PxpA family. As to quaternary structure, forms a complex composed of PxpA, PxpB and PxpC.

It carries out the reaction 5-oxo-L-proline + ATP + 2 H2O = L-glutamate + ADP + phosphate + H(+). Catalyzes the cleavage of 5-oxoproline to form L-glutamate coupled to the hydrolysis of ATP to ADP and inorganic phosphate. The chain is 5-oxoprolinase subunit A from Escherichia coli O139:H28 (strain E24377A / ETEC).